Here is a 486-residue protein sequence, read N- to C-terminus: Membrane-bound lytic murein transglycosylase F (486 aa).

The first 21 residues, 1-21 (MTRIKLNYFVIGVVALLLALA), serve as a signal peptide directing secretion. The tract at residues 22–268 (LWPNIPWRNG…RLEEKYLGHV (247 aa)) is non-LT domain. Positions 269–486 (GSFDYVDTKT…VVGPGWSINN (218 aa)) are LT domain. Glu313 is an active-site residue.

In the N-terminal section; belongs to the bacterial solute-binding protein 3 family. The protein in the C-terminal section; belongs to the transglycosylase Slt family.

The protein resides in the cell outer membrane. The enzyme catalyses Exolytic cleavage of the (1-&gt;4)-beta-glycosidic linkage between N-acetylmuramic acid (MurNAc) and N-acetylglucosamine (GlcNAc) residues in peptidoglycan, from either the reducing or the non-reducing ends of the peptidoglycan chains, with concomitant formation of a 1,6-anhydrobond in the MurNAc residue.. In terms of biological role, murein-degrading enzyme that degrades murein glycan strands and insoluble, high-molecular weight murein sacculi, with the concomitant formation of a 1,6-anhydromuramoyl product. Lytic transglycosylases (LTs) play an integral role in the metabolism of the peptidoglycan (PG) sacculus. Their lytic action creates space within the PG sacculus to allow for its expansion as well as for the insertion of various structures such as secretion systems and flagella. In Yersinia enterocolitica serotype O:8 / biotype 1B (strain NCTC 13174 / 8081), this protein is Membrane-bound lytic murein transglycosylase F.